A 610-amino-acid chain; its full sequence is Elongation factor 4 (610 aa).

The tr-type G domain occupies 13–195; the sequence is SHIRNFSIVA…AIVNRLPAPK (183 aa). GTP is bound by residues 25–30 and 142–145; these read DHGKST and NKID.

The protein belongs to the TRAFAC class translation factor GTPase superfamily. Classic translation factor GTPase family. LepA subfamily.

Its subcellular location is the cell inner membrane. It carries out the reaction GTP + H2O = GDP + phosphate + H(+). Its function is as follows. Required for accurate and efficient protein synthesis under certain stress conditions. May act as a fidelity factor of the translation reaction, by catalyzing a one-codon backward translocation of tRNAs on improperly translocated ribosomes. Back-translocation proceeds from a post-translocation (POST) complex to a pre-translocation (PRE) complex, thus giving elongation factor G a second chance to translocate the tRNAs correctly. Binds to ribosomes in a GTP-dependent manner. The chain is Elongation factor 4 from Rhizobium leguminosarum bv. trifolii (strain WSM2304).